The primary structure comprises 257 residues: Diphthine synthase (257 aa).

S-adenosyl-L-methionine-binding positions include I11, D89, I92, 117-118, L169, L210, and H235; that span reads SV.

Belongs to the diphthine synthase family. As to quaternary structure, homodimer.

The enzyme catalyses 2-[(3S)-amino-3-carboxypropyl]-L-histidyl-[translation elongation factor 2] + 3 S-adenosyl-L-methionine = diphthine-[translation elongation factor 2] + 3 S-adenosyl-L-homocysteine + 3 H(+). It functions in the pathway protein modification; peptidyl-diphthamide biosynthesis. Its function is as follows. S-adenosyl-L-methionine-dependent methyltransferase that catalyzes the trimethylation of the amino group of the modified target histidine residue in translation elongation factor 2 (EF-2), to form an intermediate called diphthine. The three successive methylation reactions represent the second step of diphthamide biosynthesis. This Saccharolobus solfataricus (strain ATCC 35092 / DSM 1617 / JCM 11322 / P2) (Sulfolobus solfataricus) protein is Diphthine synthase.